The following is a 409-amino-acid chain: Na(+)/H(+) antiporter NhaA (409 aa).

Transmembrane regions (helical) follow at residues 13–33 (SGGI…NTFL), 58–78 (LILW…GLEL), 93–113 (IALP…IFYL), 120–140 (FALG…LGIL), 153–173 (IFLM…IALF), 176–196 (SELS…LFAL), 216–236 (VAVL…AFFI), 256–276 (LHGW…AGIS), 279–299 (GVGL…GLFV), 326–346 (FIQL…SLFI), and 363–383 (LAIL…LKFS).

This sequence belongs to the NhaA Na(+)/H(+) (TC 2.A.33) antiporter family.

It is found in the cell inner membrane. It catalyses the reaction Na(+)(in) + 2 H(+)(out) = Na(+)(out) + 2 H(+)(in). Na(+)/H(+) antiporter that extrudes sodium in exchange for external protons. This Campylobacter concisus (strain 13826) protein is Na(+)/H(+) antiporter NhaA.